The sequence spans 189 residues: Translation machinery-associated protein 22 (189 aa).

The SUI1 domain occupies 94-165 (VTIKRIERNK…EAKDYIEKLL (72 aa)).

The protein belongs to the DENR family. Interacts with the 40S ribosomal subunit.

The protein resides in the cytoplasm. This chain is Translation machinery-associated protein 22 (TMA22), found in Debaryomyces hansenii (strain ATCC 36239 / CBS 767 / BCRC 21394 / JCM 1990 / NBRC 0083 / IGC 2968) (Yeast).